Reading from the N-terminus, the 145-residue chain is MYPAHLLVLLAVCISLLGASAIPPLPLNLVQFTYLIQCANKGSRASYHYADYGCYCGAGGSGTPVDELDRCCKVHDDCYGEAEKMGCYPKLTMYNYYCGTEGPYCNTKTDCQRYVCACDLQAAKCFARSPYNNKNYNIDTSKRCK.

A signal peptide spans 1–21 (MYPAHLLVLLAVCISLLGASA). The propeptide occupies 22 to 27 (IPPLPL). 7 disulfides stabilise this stretch: Cys38-Cys98, Cys54-Cys144, Cys56-Cys72, Cys71-Cys125, Cys78-Cys118, Cys87-Cys111, and Cys105-Cys116. Residues Tyr55, Gly57, and Gly59 each contribute to the Ca(2+) site. His75 is a catalytic residue. Asp76 contacts Ca(2+). Asp119 is an active-site residue.

This sequence belongs to the phospholipase A2 family. Group I subfamily. D49 sub-subfamily. Ca(2+) is required as a cofactor. As to expression, expressed by the venom gland.

The protein localises to the secreted. It carries out the reaction a 1,2-diacyl-sn-glycero-3-phosphocholine + H2O = a 1-acyl-sn-glycero-3-phosphocholine + a fatty acid + H(+). In terms of biological role, PLA2 catalyzes the calcium-dependent hydrolysis of the 2-acyl groups in 3-sn-phosphoglycerides. This Laticauda semifasciata (Black-banded sea krait) protein is Basic phospholipase A2 cPm05.